A 108-amino-acid chain; its full sequence is Nucleoid-associated protein Pmen_2646 (108 aa).

A disordered region spans residues 1–25 (MMKGGMAGLMKQAQQMQEKMQKMQE).

The protein belongs to the YbaB/EbfC family. Homodimer.

It localises to the cytoplasm. Its subcellular location is the nucleoid. Binds to DNA and alters its conformation. May be involved in regulation of gene expression, nucleoid organization and DNA protection. This chain is Nucleoid-associated protein Pmen_2646, found in Ectopseudomonas mendocina (strain ymp) (Pseudomonas mendocina).